The following is a 124-amino-acid chain: Cytochrome b5-like protein (124 aa).

A helical transmembrane segment spans residues 5–22 (YLLILIIIYVIKIICRYF). The 76-residue stretch at 49–124 (NQINQVNQVN…ILSKYKITEK (76 aa)) folds into the Cytochrome b5 heme-binding domain. The heme site is built by His-84 and His-108.

It belongs to the cytochrome b5 family.

The protein resides in the membrane. Membrane bound hemoprotein which function as an electron carrier for several membrane bound oxygenases. The chain is Cytochrome b5-like protein from Acanthamoeba polyphaga (Amoeba).